Reading from the N-terminus, the 478-residue chain is Transposase for insertion sequence element IS231E (478 aa).

It belongs to the transposase 11 family.

Its function is as follows. Involved in the transposition of the insertion sequence. The chain is Transposase for insertion sequence element IS231E from Bacillus thuringiensis subsp. finitimus.